Here is a 1486-residue protein sequence, read N- to C-terminus: MSDRLGQITQGKDGKSKYSTLSLFDKYKGRSVGAVRSSVIPRHGLQSLGKVATARRMPPPANLPSLKSENKGNDPNIVIVPKDGTGWANKQDQQDPKSSSVTASQPPESQPQPGLQKSVSNLQKPTQSISQENTNSVPGGPKSWAQLSGKPVGHEGGLRGSSRLLSFSPEEFPTLKAAGGQDKAGKEKGALDLSYGPGPSLRPQNVTSWREGGGRNIISAASLSASPTELGSRNASGADGAPSLACTSDSKEPSLRPAQPSRRGASQFMGHGYQPPTYHDMLPAFMCSPQSSENQTTVERSSFPLPQLRLEPRVPFRQFQMNDQDGKERPGVARPVRPLRQLVERAPRPTIINAENLKGLDDLDTDADDGWAGLHEEVDYSEKLKFSDDEDEEDVVKDGRSKWNNWDPRRQRALSLSSADSTDAKRTQEEGKDWSGTAGGSRVIRKVPEPQPPSRKLHSWASGPDYQKPTMGSMFRQHSAEDKEDKPPPRQKFIQSEMSEAVERARKRREEEERRAREERLAACAAKLKQLDQKCRQAQKANETPKPVEKEVPRSPGIEKVSPPENGPVVRKGSPEFPVQEAPTMFLEETPATSPTVAQSNSSSSSSSSSSIEEEVRESGSPAQEFSKYQKSLPPRFQRQQQQQQQQQQQQQQQEQLYKMQHWQPVYPPPSHPQRTFYPHHPQMLGFDPRWMMMPSYMDPRITPTRTPVDFYPSALHPSGLMKPMMPQESLSGTGCRSEDQNCVPSLQERKVTALDPAPVWSPEGYMALQNKGYSLPHPKSADTLAMGMHVRSPDEALPGGLGSHSPYALERTTHASSDGPETPSKKSEREVSLPTQRASEQEEARKQFDLGYGNALIDNCASSPGEENEASSVVGEGFIEVLTKKQRRLLEEERRKKEQAAQVPVKGRGLSSRIPPRFAKKQNGLCLEQDVTVPGSSLGTEIWENSSQALPVQGAASDSWRTAVTAFSSTEPGTSEQGFKSSQGDSGVDLSAESRESSATSSQRSSPYGTLKPEEISGPGLAESKADSHKDQAQKQAEHKDSEQGSAQSKEHRPGPIGNERSLKNRKGSEGAERLPGAVVPPVNGVEIHVDSVLPVPPIEFGVSPKDSDFSLPPGSVSGPVGNPVAKLQDVLASNAGLTQSIPILRRDHHMQRAIGLSPMSFPTADLTLKMESARKAWENSPSLPEQSSPGGAGSGIQPPSSVGASNGVNYSSFGGVSMPPMPVASVAPSASIPGSHLPPLYLDGHVFASQPRLVPQTIPQQQSYQQAATAQQIPISLHTSLQAQAQLGLRGGLPVSQSQEIFSSLQPFRSQVYMHPSLSPPSTMILSGGTALKPPYSAFPGIQPLEMVKPQSGSPYQPMSGNQALVYEGQLGQAAGLGTSQMLDSQLPQLTMPLPRYGSGQQPLILPQSIQLPPGQSLSVGAPRRVPPPGSQPPVLNTSRESAPMELKGFHFADSKQNVPTGGSAPSPQAYRQSEWMKNPAWEP.

Disordered stretches follow at residues 1–20 (MSDR…KYST), 39–306 (VIPR…FPLP), 320–341 (QMND…PLRQ), 385–519 (KFSD…AREE), and 531–658 (LDQK…EQLY). A compositionally biased stretch (polar residues) spans 88-137 (ANKQDQQDPKSSSVTASQPPESQPQPGLQKSVSNLQKPTQSISQENTNSV). Phosphoserine is present on residues serine 166, serine 168, serine 222, and serine 226. Positions 219–235 (SAASLSASPTELGSRNA) are enriched in polar residues. Phosphothreonine is present on threonine 228. Lysine 251 participates in a covalent cross-link: Glycyl lysine isopeptide (Lys-Gly) (interchain with G-Cter in SUMO2). A compositionally biased stretch (polar residues) spans 288-300 (SPQSSENQTTVER). 2 positions are modified to phosphoserine: serine 387 and serine 415. Basic and acidic residues-rich tracts occupy residues 422 to 433 (TDAKRTQEEGKD), 478 to 488 (HSAEDKEDKPP), and 501 to 519 (AVER…AREE). Phosphoserine is present on serine 479. The stretch at 494 to 544 (IQSEMSEAVERARKRREEEERRAREERLAACAAKLKQLDQKCRQAQKANET) forms a coiled coil. Serine 555 carries the post-translational modification Phosphoserine. The segment covering 600 to 611 (SNSSSSSSSSSS) has biased composition (low complexity). Serine 621 carries the post-translational modification Phosphoserine. The span at 638–656 (QRQQQQQQQQQQQQQQQEQ) shows a compositional bias: low complexity. Residue lysine 751 forms a Glycyl lysine isopeptide (Lys-Gly) (interchain with G-Cter in SUMO2) linkage. Threonine 753 carries the phosphothreonine modification. Serine 762 and serine 793 each carry phosphoserine. Disordered regions lie at residues 792 to 847 (RSPD…EARK), 893 to 918 (EERR…IPPR), and 950 to 1080 (ALPV…PGAV). A coiled-coil region spans residues 880–904 (IEVLTKKQRRLLEEERRKKEQAAQV). The span at 960-986 (SWRTAVTAFSSTEPGTSEQGFKSSQGD) shows a compositional bias: polar residues. Residues 998–1007 (SSATSSQRSS) are compositionally biased toward low complexity. Basic and acidic residues-rich tracts occupy residues 1025–1055 (SKAD…EHRP) and 1062–1074 (RSLK…EGAE). A phosphoserine mark is found at serine 1070 and serine 1159. Disordered stretches follow at residues 1177–1205 (KAWE…SSVG), 1410–1443 (QSIQ…TSRE), and 1455–1486 (ADSK…AWEP). Polar residues predominate over residues 1181 to 1191 (NSPSLPEQSSP). Low complexity predominate over residues 1410–1421 (QSIQLPPGQSLS). Residues 1457–1474 (SKQNVPTGGSAPSPQAYR) show a composition bias toward polar residues.

The polypeptide is Protein PRRC2B (Prrc2b) (Mus musculus (Mouse)).